A 285-amino-acid chain; its full sequence is MGLKFAYSKDPSSLKYLSNKKVFGLLGVPFDSTSTYKPGSRFGPLMIRQASYNFENYSLHYRKKLDVPIIDLGDIEVILGDFKNTCRNISEKVQEVLKKGMIPIVLGGEHSITYGVVKTFDLSDVTILHFDAHMDMANTYAGKKFSHATVMRRIYELHPKKIVQIGVRSCTKEEHEFVLNENIKYYTSRDIIEKFNMVLNEINKLDGPFYVTVDIDVLDPGYAPGVGNPTPVGITPYHMEKFIEKIARKKIIGIDIVEVATDRIGDPAAMNAAKILYDFLFAIKI.

The Mn(2+) site is built by H110, D131, H133, D135, D214, and D216.

It belongs to the arginase family. Mn(2+) serves as cofactor.

This is an uncharacterized protein from Methanothermus fervidus.